Reading from the N-terminus, the 149-residue chain is D-aminoacyl-tRNA deacylase (149 aa).

The short motif at 137-138 (GP) is the Gly-cisPro motif, important for rejection of L-amino acids element.

The protein belongs to the DTD family. As to quaternary structure, homodimer.

It localises to the cytoplasm. It catalyses the reaction glycyl-tRNA(Ala) + H2O = tRNA(Ala) + glycine + H(+). It carries out the reaction a D-aminoacyl-tRNA + H2O = a tRNA + a D-alpha-amino acid + H(+). An aminoacyl-tRNA editing enzyme that deacylates mischarged D-aminoacyl-tRNAs. Also deacylates mischarged glycyl-tRNA(Ala), protecting cells against glycine mischarging by AlaRS. Acts via tRNA-based rather than protein-based catalysis; rejects L-amino acids rather than detecting D-amino acids in the active site. By recycling D-aminoacyl-tRNA to D-amino acids and free tRNA molecules, this enzyme counteracts the toxicity associated with the formation of D-aminoacyl-tRNA entities in vivo and helps enforce protein L-homochirality. The chain is D-aminoacyl-tRNA deacylase from Clostridium botulinum (strain Kyoto / Type A2).